A 758-amino-acid chain; its full sequence is Photosystem I P700 chlorophyll a apoprotein A1 (758 aa).

Helical transmembrane passes span 78-101 (VFSAHFGQLSIIFLWLSGMYFHGA), 164-187 (LYCTAIGALVFAGLMLFAGWFHYH), 203-227 (LNHHLAGLLGLGSLSWARHQVHVSL), 299-317 (IAHHHLAIAILFLIAGHMY), 354-377 (WHAQLSINLAMLGSLTIVVAQHMY), 393-419 (LSLFTHHMWIGGFLIVGAAAHAAIFMV), 441-463 (AIISHLNWVCIFLGFHSFGLYIH), and 539-557 (FLVHHIHAFTIHVTVLILL). Residues cysteine 581 and cysteine 590 each coordinate [4Fe-4S] cluster. 2 consecutive transmembrane segments (helical) span residues 597-618 (HVFLGLFWMYNSISVVIFHFSW) and 672-694 (LSAYGLFFLGAHFVWAFSLMFLF). Position 683 (histidine 683) interacts with chlorophyll a'. 2 residues coordinate chlorophyll a: methionine 691 and tyrosine 699. Residue tryptophan 700 coordinates phylloquinone. Residues 732-753 (AVGVTHYLLGGIATTWAFFLAR) form a helical membrane-spanning segment.

Belongs to the PsaA/PsaB family. The PsaA/B heterodimer binds the P700 chlorophyll special pair and subsequent electron acceptors. PSI consists of a core antenna complex that captures photons, and an electron transfer chain that converts photonic excitation into a charge separation. The eukaryotic PSI reaction center is composed of at least 11 subunits. Requires P700 is a chlorophyll a/chlorophyll a' dimer, A0 is one or more chlorophyll a, A1 is one or both phylloquinones and FX is a shared 4Fe-4S iron-sulfur center. as cofactor.

It is found in the plastid. It localises to the chloroplast thylakoid membrane. The catalysed reaction is reduced [plastocyanin] + hnu + oxidized [2Fe-2S]-[ferredoxin] = oxidized [plastocyanin] + reduced [2Fe-2S]-[ferredoxin]. Its function is as follows. PsaA and PsaB bind P700, the primary electron donor of photosystem I (PSI), as well as the electron acceptors A0, A1 and FX. PSI is a plastocyanin-ferredoxin oxidoreductase, converting photonic excitation into a charge separation, which transfers an electron from the donor P700 chlorophyll pair to the spectroscopically characterized acceptors A0, A1, FX, FA and FB in turn. Oxidized P700 is reduced on the lumenal side of the thylakoid membrane by plastocyanin. The sequence is that of Photosystem I P700 chlorophyll a apoprotein A1 from Pisum sativum (Garden pea).